The chain runs to 175 residues: Putative adenylate cyclase MJ0240 (175 aa).

One can recognise a CYTH domain in the interval 1–175 (MIEVEIKVKI…RKSYLELRGL (175 aa)). Tyr37 functions as the Proton acceptor in the catalytic mechanism.

It belongs to the adenylyl cyclase CyaB family.

Its subcellular location is the cytoplasm. It catalyses the reaction ATP = 3',5'-cyclic AMP + diphosphate. Could catalyze the biosynthesis of cyclic AMP (cAMP) from ATP. The polypeptide is Putative adenylate cyclase MJ0240 (Methanocaldococcus jannaschii (strain ATCC 43067 / DSM 2661 / JAL-1 / JCM 10045 / NBRC 100440) (Methanococcus jannaschii)).